A 1917-amino-acid chain; its full sequence is Diacylglycerol kinase eta (1917 aa).

A compositionally biased stretch (basic and acidic residues) spans 1 to 10 (MSHLKLDTLH). The disordered stretch occupies residues 1 to 37 (MSHLKLDTLHVQRSPRGSRRSSRSSGRSSACSSGSIS). The segment covering 23 to 37 (RSSGRSSACSSGSIS) has biased composition (low complexity). The PH domain occupies 82–175 (AIIKEGFLLK…WLGSLKTATA (94 aa)). 2 Phorbol-ester/DAG-type zinc fingers span residues 195–245 (HHHW…IANC) and 268–319 (PHQW…AVAC). The 137-residue stretch at 350–486 (GNFSPLLVFV…DRWSIMVFEK (137 aa)) folds into the DAGKc domain. Disordered stretches follow at residues 1015 to 1053 (TTLC…PPRI), 1114 to 1149 (LEQQ…SEDE), and 1380 to 1399 (KDKD…EETN). Residues 1128–1145 (PEQQQTPTNKGPNSLATT) are compositionally biased toward polar residues. Residues 1854 to 1917 (WSVNEVVTWL…LQAIKDLSEN (64 aa)) form the SAM domain.

The protein belongs to the eukaryotic diacylglycerol kinase family.

It is found in the cytoplasm. The enzyme catalyses a 1,2-diacyl-sn-glycerol + ATP = a 1,2-diacyl-sn-glycero-3-phosphate + ADP + H(+). Phosphorylates diacylglycerol (DAG) to generate phosphatidic acid (PA). This is Diacylglycerol kinase eta from Drosophila yakuba (Fruit fly).